Consider the following 142-residue polypeptide: MPRCRWLSLILLTIPLALVARKDPKKNETGVLRKLKPVNASNANVKQCLWFAMQEYNKESEDKYVFLVVKTLQAQLQVTNLLEYLIDVEIARSDCRKPLSTNEICAIQENSKLKRKLSCSFLVGALPWNGEFTVMEKKCEDA.

Positions methionine 1–arginine 21 are cleaved as a signal peptide. N-linked (GlcNAc...) asparagine glycans are attached at residues asparagine 27 and asparagine 39. The Secondary area of contact signature appears at glutamine 77–leucine 81. Disulfide bonds link cysteine 95-cysteine 105 and cysteine 119-cysteine 139.

The protein belongs to the cystatin family. Proximal caput region of the epididymis. Lower expression in the testis. Within the testis it is localized to the elongating spermatids, whereas within the epididymis it is exclusively synthesized by the proximal caput epithelium.

It localises to the secreted. Its function is as follows. Performs a specialized role during sperm development and maturation. This chain is Cystatin-8 (CST8), found in Homo sapiens (Human).